The sequence spans 207 residues: Histone H1 (207 aa).

The span at 1–15 (MAEVAPAPAAAAPAK) shows a compositional bias: low complexity. Disordered regions lie at residues 1–28 (MAEV…PKKA) and 105–207 (EAKK…PKKK). Position 2 is an N-acetylalanine (Ala-2). Residues 16–27 (APKKKAAAKPKK) are compositionally biased toward basic residues. The region spanning 28-101 (AGPSVGELIV…GASGSFKLNK (74 aa)) is the H15 domain. 2 stretches are compositionally biased toward basic residues: residues 117 to 168 (KAKK…KVKK) and 175 to 207 (KAAK…PKKK).

It belongs to the histone H1/H5 family. In terms of tissue distribution, oncorhyncin II is expressed in skin.

The protein localises to the nucleus. Its subcellular location is the chromosome. The protein resides in the secreted. Functionally, histones H1 are necessary for the condensation of nucleosome chains into higher-order structures. Its function is as follows. Oncorhyncin II has antibacterial activity against Gram-positive and Gram-negative bacteria at submicromolar concentrations. Potentially important role in mucosal defense. This is Histone H1 from Oncorhynchus mykiss (Rainbow trout).